Reading from the N-terminus, the 299-residue chain is Protease HtpX homolog (299 aa).

Transmembrane regions (helical) follow at residues 14-34 and 39-59; these read WLLLLVFFLLLGLVGYGVGYL and GFGGLILALVIGFIYAVTMIF. Histidine 143 contacts Zn(2+). The active site involves glutamate 144. Histidine 147 is a binding site for Zn(2+). 2 consecutive transmembrane segments (helical) span residues 153–173 and 198–218; these read IRISTIAVALASAITMLAVMA and IILLIISLIAIILAPLAATLV. Zn(2+) is bound at residue glutamate 227.

It belongs to the peptidase M48B family. Zn(2+) is required as a cofactor.

The protein localises to the cell membrane. This chain is Protease HtpX homolog, found in Streptococcus thermophilus (strain ATCC BAA-491 / LMD-9).